The primary structure comprises 281 residues: Shikimate dehydrogenase (NADP(+)) (281 aa).

Shikimate-binding positions include 15-17 (SKS) and T62. Residue K66 is the Proton acceptor of the active site. N87 and D102 together coordinate shikimate. Residues 127-131 (GAGGS), 151-156 (NRTPER), and L217 contribute to the NADP(+) site. Position 219 (Y219) interacts with shikimate. Position 241 (G241) interacts with NADP(+).

This sequence belongs to the shikimate dehydrogenase family. Homodimer.

It carries out the reaction shikimate + NADP(+) = 3-dehydroshikimate + NADPH + H(+). It functions in the pathway metabolic intermediate biosynthesis; chorismate biosynthesis; chorismate from D-erythrose 4-phosphate and phosphoenolpyruvate: step 4/7. Involved in the biosynthesis of the chorismate, which leads to the biosynthesis of aromatic amino acids. Catalyzes the reversible NADPH linked reduction of 3-dehydroshikimate (DHSA) to yield shikimate (SA). This is Shikimate dehydrogenase (NADP(+)) from Stenotrophomonas maltophilia (strain R551-3).